The chain runs to 89 residues: Co-chaperonin GroES (89 aa).

It belongs to the GroES chaperonin family. As to quaternary structure, heptamer of 7 subunits arranged in a ring. Interacts with the chaperonin GroEL.

It localises to the cytoplasm. Its function is as follows. Together with the chaperonin GroEL, plays an essential role in assisting protein folding. The GroEL-GroES system forms a nano-cage that allows encapsulation of the non-native substrate proteins and provides a physical environment optimized to promote and accelerate protein folding. GroES binds to the apical surface of the GroEL ring, thereby capping the opening of the GroEL channel. This is Co-chaperonin GroES from Wolinella succinogenes (strain ATCC 29543 / DSM 1740 / CCUG 13145 / JCM 31913 / LMG 7466 / NCTC 11488 / FDC 602W) (Vibrio succinogenes).